We begin with the raw amino-acid sequence, 427 residues long: Trigger factor (427 aa).

The region spanning 163-248 (GDTVILDFEG…LHEIKTKEVP (86 aa)) is the PPIase FKBP-type domain.

The protein belongs to the FKBP-type PPIase family. Tig subfamily.

Its subcellular location is the cytoplasm. It carries out the reaction [protein]-peptidylproline (omega=180) = [protein]-peptidylproline (omega=0). Functionally, involved in protein export. Acts as a chaperone by maintaining the newly synthesized protein in an open conformation. Functions as a peptidyl-prolyl cis-trans isomerase. This chain is Trigger factor, found in Listeria monocytogenes serotype 4a (strain HCC23).